Consider the following 757-residue polypeptide: Receptor protein kinase-like protein At4g34220 (757 aa).

Positions M1–A26 are cleaved as a signal peptide. LRR repeat units lie at residues Y104–A126, E128–V150, N152–L174, N176–A198, Q199–K219, S220–K242, and A245–L267. A helical transmembrane segment spans residues I339–Y359. Positions K471 to I753 constitute a Protein kinase domain. Position 473 is a phosphoserine (S473). T494 is modified (phosphothreonine). S553 carries the post-translational modification Phosphoserine. The segment at A633–T654 is disordered. Phosphothreonine is present on residues T638 and T639. Positions T638 to T654 are enriched in polar residues.

The protein belongs to the protein kinase superfamily.

The protein localises to the membrane. This chain is Receptor protein kinase-like protein At4g34220, found in Arabidopsis thaliana (Mouse-ear cress).